Reading from the N-terminus, the 539-residue chain is Phosphatidylinositol 4-phosphate 5-kinase type-1 beta (539 aa).

Positions 1–21 (MSSTAENGDAVPGKQNEEKTY) are disordered. Residues 25-395 (ASSAIKGAIQ…RFLKFMNSRV (371 aa)) form the PIPK domain. Phosphoserine occurs at positions 445, 447, and 448.

As to quaternary structure, interacts with RAC1, AJUBA, PLD1, PLD2 and ARF1. In terms of tissue distribution, highly expressed in brain and testis. Barely detectable in liver and skeletal muscle.

The protein localises to the cytoplasm. It is found in the cytosol. The protein resides in the cell membrane. It localises to the endomembrane system. The enzyme catalyses a 1,2-diacyl-sn-glycero-3-phospho-(1D-myo-inositol 4-phosphate) + ATP = a 1,2-diacyl-sn-glycero-3-phospho-(1D-myo-inositol-4,5-bisphosphate) + ADP + H(+). It carries out the reaction 1-octadecanoyl-2-(5Z,8Z,11Z,14Z)-eicosatetraenoyl-sn-glycero-3-phospho-1D-myo-inositol 4-phosphate + ATP = 1-octadecanoyl-2-(5Z,8Z,11Z,14Z)-eicosatetraenoyl-sn-glycero-3-phospho-1D-myo-inositol 4,5-bisphosphate + ADP + H(+). It catalyses the reaction 1-octadecanoyl-2-(9Z)-octadecenoyl-sn-glycero-3-phospho-1D-myo-inositol 4-phosphate + ATP = 1-octadecanoyl-2-(9Z)-octadecenoyl-sn-glycero-3-phospho-1D-myo-inositol 4,5-bisphosphate + ADP + H(+). The catalysed reaction is 1-octadecanoyl-2-(9Z)-octadecenoyl-sn-glycero-3-phospho-1D-myo-inositol + ATP = 1-octadecanoyl-2-(9Z)-octadecenoyl-sn-glycero-3-phospho-1D-myo-inositol 5-phosphate + ADP + H(+). The enzyme catalyses 1-octadecanoyl-2-(9Z,12Z)-octadecadienoyl-sn-glycero-3-phospho-1D-myo-inositol + ATP = 1-octadecanoyl-2-(9Z,12Z)-octadecadienoyl-sn-glycero-3-phospho-1D-myo-inositol 5-phosphate + ADP + H(+). It carries out the reaction 1-octadecanoyl-2-(5Z,8Z,11Z,14Z-eicosatetraenoyl)-sn-glycero-3-phospho-(1D-myo-inositol) + ATP = 1-octadecanoyl-2-(5Z,8Z,11Z,14Z)-eicosatetraenoyl-sn-glycero-3-phospho-1D-myo-inositol 5-phosphate + ADP + H(+). It catalyses the reaction 1,2-di-(9Z,12Z)-octadecadienoyl-sn-glycero-3-phospho-1D-myo-inositol + ATP = 1,2-di(9Z,12Z)-octadecadienoyl-sn-glycero-3-phospho-1D-myo-inositol 5-phosphate + ADP + H(+). Its activity is regulated as follows. Activated by phosphatidic acid. Its function is as follows. Catalyzes the phosphorylation of phosphatidylinositol 4-phosphate (PtdIns(4)P/PI4P) to form phosphatidylinositol 4,5-bisphosphate (PtdIns(4,5)P2/PIP2), a lipid second messenger that regulates several cellular processes such as signal transduction, vesicle trafficking, actin cytoskeleton dynamics, cell adhesion, and cell motility. PtdIns(4,5)P2 can directly act as a second messenger or can be utilized as a precursor to generate other second messengers: inositol 1,4,5-trisphosphate (IP3), diacylglycerol (DAG) or phosphatidylinositol-3,4,5-trisphosphate (PtdIns(3,4,5)P3/PIP3). Mediates RAC1-dependent reorganization of actin filaments. Contributes to the activation of phospholipase PLD2. Together with PIP5K1A, is required, after stimulation by G-protein coupled receptors, for the synthesis of IP3 that will induce stable platelet adhesion. The sequence is that of Phosphatidylinositol 4-phosphate 5-kinase type-1 beta from Mus musculus (Mouse).